Here is a 294-residue protein sequence, read N- to C-terminus: Elongation factor Ts (294 aa).

The segment at threonine 82 to valine 85 is involved in Mg(2+) ion dislocation from EF-Tu.

This sequence belongs to the EF-Ts family.

The protein resides in the cytoplasm. Associates with the EF-Tu.GDP complex and induces the exchange of GDP to GTP. It remains bound to the aminoacyl-tRNA.EF-Tu.GTP complex up to the GTP hydrolysis stage on the ribosome. In Nitrosomonas eutropha (strain DSM 101675 / C91 / Nm57), this protein is Elongation factor Ts.